The chain runs to 1149 residues: Translocase of chloroplast 126, chloroplastic (1149 aa).

Disordered stretches follow at residues 1–206, 219–292, and 315–431; these read MDAL…GKEL, NMPN…RELT, and LELK…VNPS. Positions 131–142 are enriched in acidic residues; that stretch reads LYYDDYGDDGEV. Low complexity predominate over residues 152 to 168; it reads TSSSSSSSSSECSSSAS. Composition is skewed to acidic residues over residues 271–280 and 335–357; these read YDQEGEDADS and GESDADADADADDEDVESGDEHE. Residues 406–429 show a composition bias toward polar residues; that stretch reads TAATDTQSSNAASSTQVAGTTDVN. One can recognise an AIG1-type G domain in the interval 514-743; the sequence is DFACTILVLG…KLQDTAAPGR (230 aa). The segment at 523–530 is G1; sequence GKTGVGKS. Residue 526-531 coordinates GTP; sequence GVGKSA. Mg(2+) is bound at residue serine 530. Positions 550-554 are G2; that stretch reads STTNV. Positions 570 to 573 are G3; that stretch reads DTPG. The segment at 642 to 645 is G4; that stretch reads THAS. GTP contacts are provided by residues histidine 643 and 691–692; that span reads EN. A G5 region spans residues 691–693; that stretch reads ENH. Disordered stretches follow at residues 769–800 and 833–869; these read KLPDEQLDESDESDDDEEDEEEGDEYDDLPPF and KQHREQLQRRKEMKKRATAMRKEGLSHPADEADDEAG. The segment covering 773 to 796 has biased composition (acidic residues); the sequence is EQLDESDESDDDEEDEEEGDEYDD. 2 stretches are compositionally biased toward basic and acidic residues: residues 833-842 and 852-862; these read KQHREQLQRR and MRKEGLSHPAD. Residues 1123-1144 form a helical membrane-spanning segment; the sequence is MVLIGIVPILRSLINCRFGFGG.

It belongs to the TRAFAC class TrmE-Era-EngA-EngB-Septin-like GTPase superfamily. AIG1/Toc34/Toc159-like paraseptin GTPase family. TOC159 subfamily. In terms of assembly, part of the TOC core complex. The cofactor is Mg(2+).

The protein resides in the plastid. It is found in the chloroplast outer membrane. GTPase involved in protein precursor import into chloroplasts. Seems to recognize chloroplast-destined precursor proteins and regulate their presentation to the translocation channel through GTP hydrolysis. Probably specialized in the import of nuclear encoded non-photosynthetic preproteins from the cytoplasm to the chloroplast. In Physcomitrium patens (Spreading-leaved earth moss), this protein is Translocase of chloroplast 126, chloroplastic.